Reading from the N-terminus, the 238-residue chain is Adenylate dimethylallyltransferase (238 aa).

The protein belongs to the isopentenyl transferase family.

The catalysed reaction is dimethylallyl diphosphate + AMP = N(6)-(dimethylallyl)adenosine 5'-phosphate + diphosphate. Transfers dimethylallyl groups to AMP as part of the biosynthesis of cytokinin phytohormones. This is Adenylate dimethylallyltransferase (tzs) from Ralstonia nicotianae (strain ATCC BAA-1114 / GMI1000) (Ralstonia solanacearum).